The chain runs to 498 residues: GTPase Der (498 aa).

EngA-type G domains follow at residues 3 to 166 and 212 to 385; these read PVVA…FEEL and IKFA…RSAT. Residues 9-16, 56-60, 118-121, 218-225, 265-269, and 330-333 contribute to the GTP site; these read GRPNVGKS, DTGGI, NKTD, DTAGV, and NKWD. Positions 386 to 470 constitute a KH-like domain; the sequence is KRISTSMLTR…PIHIEFQEGD (85 aa).

It belongs to the TRAFAC class TrmE-Era-EngA-EngB-Septin-like GTPase superfamily. EngA (Der) GTPase family. As to quaternary structure, associates with the 50S ribosomal subunit.

Functionally, GTPase that plays an essential role in the late steps of ribosome biogenesis. The sequence is that of GTPase Der from Tolumonas auensis (strain DSM 9187 / NBRC 110442 / TA 4).